The chain runs to 156 residues: ATP synthase subunit b (156 aa).

Residues Ala-11 to Ala-31 traverse the membrane as a helical segment.

Belongs to the ATPase B chain family. F-type ATPases have 2 components, F(1) - the catalytic core - and F(0) - the membrane proton channel. F(1) has five subunits: alpha(3), beta(3), gamma(1), delta(1), epsilon(1). F(0) has three main subunits: a(1), b(2) and c(10-14). The alpha and beta chains form an alternating ring which encloses part of the gamma chain. F(1) is attached to F(0) by a central stalk formed by the gamma and epsilon chains, while a peripheral stalk is formed by the delta and b chains.

It localises to the cell inner membrane. F(1)F(0) ATP synthase produces ATP from ADP in the presence of a proton or sodium gradient. F-type ATPases consist of two structural domains, F(1) containing the extramembraneous catalytic core and F(0) containing the membrane proton channel, linked together by a central stalk and a peripheral stalk. During catalysis, ATP synthesis in the catalytic domain of F(1) is coupled via a rotary mechanism of the central stalk subunits to proton translocation. Functionally, component of the F(0) channel, it forms part of the peripheral stalk, linking F(1) to F(0). This Photorhabdus laumondii subsp. laumondii (strain DSM 15139 / CIP 105565 / TT01) (Photorhabdus luminescens subsp. laumondii) protein is ATP synthase subunit b.